Reading from the N-terminus, the 227-residue chain is Ribonuclease S-5 (227 aa).

The N-terminal stretch at 1–27 (MGITGMVYVVTMVFLLIVLILSSSTVG) is a signal peptide. Gln-36 is a binding site for RNA. A disulfide bridge links Cys-42 with Cys-49. A glycan (N-linked (GlcNAc...) asparagine) is linked at Asn-45. RNA-binding positions include His-60, 97–98 (NV), Phe-107, 110–111 (KE), and 114–115 (KH). His-60 functions as the Proton donor in the catalytic mechanism. An intrachain disulfide couples Cys-75 to Cys-118. Glu-111 is a catalytic residue. His-115 (proton acceptor) is an active-site residue. Asn-143 is a glycosylation site (N-linked (GlcNAc...) asparagine). Cystine bridges form between Cys-182–Cys-220 and Cys-197–Cys-208.

It belongs to the RNase T2 family. In terms of processing, N-glycan at Asn-45 consists of disaccharide (GlcNAc-GlcNAc). N-linked core structure at Asn-143 contains xylose.

The catalysed reaction is a ribonucleotidyl-ribonucleotide-RNA + H2O = a 3'-end 3'-phospho-ribonucleotide-RNA + a 5'-end dephospho-ribonucleoside-RNA + H(+). Its function is as follows. Self-incompatibility (SI) is the inherited ability of a flowering plant to prevent self-fertilization by discriminating between self and non-self pollen during pollination. In many species, self-incompatibility is controlled by the single, multiallelic locus S. The chain is Ribonuclease S-5 from Pyrus pyrifolia (Chinese pear).